A 668-amino-acid polypeptide reads, in one-letter code: Acetoin catabolism regulatory protein (668 aa).

The 230-residue stretch at 341-570 (LTGGDAALQL…NVLEYARAVC (230 aa)) folds into the Sigma-54 factor interaction domain. ATP is bound by residues 369–376 (GETGSGKE) and 433–442 (ADGGTLFLDE). Low complexity predominate over residues 586 to 606 (GPAPSAALPQPGPAQSPAAAP). The interval 586 to 611 (GPAPSAALPQPGPAQSPAAAPFDPHQ) is disordered. Residues 630 to 649 (LSAVARQIGVSRMTLYRRME) constitute a DNA-binding region (H-T-H motif).

Functionally, required for sigma-54-dependent transcription of acoXABC. The chain is Acetoin catabolism regulatory protein (acoR) from Cupriavidus necator (strain ATCC 17699 / DSM 428 / KCTC 22496 / NCIMB 10442 / H16 / Stanier 337) (Ralstonia eutropha).